A 127-amino-acid polypeptide reads, in one-letter code: Glycine cleavage system H protein (127 aa).

The region spanning 24 to 105 is the Lipoyl-binding domain; the sequence is TALAGITDFA…YGEGWLVKIK (82 aa). At K65 the chain carries N6-lipoyllysine.

Belongs to the GcvH family. In terms of assembly, the glycine cleavage system is composed of four proteins: P, T, L and H. (R)-lipoate is required as a cofactor.

Functionally, the glycine cleavage system catalyzes the degradation of glycine. The H protein shuttles the methylamine group of glycine from the P protein to the T protein. This is Glycine cleavage system H protein from Chlorobium phaeobacteroides (strain DSM 266 / SMG 266 / 2430).